A 338-amino-acid polypeptide reads, in one-letter code: Fe-S cluster assembly protein DRE2 (338 aa).

Residues 1 to 165 (MAKSGLLLIH…LPSFKKAANK (165 aa)) are N-terminal SAM-like domain. The linker stretch occupies residues 166 to 232 (PLPTFKKKVE…DDLLNEEDAK (67 aa)). Residues 181–223 (VEARVHKAENDDDELEDEEDENLFDASRSKYFDEDDSESLDED) are disordered. Acidic residues-rich tracts occupy residues 190-203 (NDDDELEDEEDENL) and 213-223 (DEDDSESLDED). [2Fe-2S] cluster is bound by residues cysteine 242, cysteine 253, cysteine 256, and cysteine 258. A fe-S binding site A region spans residues 242–258 (CGKSKTKKKKACKDCSC). Residues cysteine 301, cysteine 304, cysteine 312, and cysteine 315 each coordinate [4Fe-4S] cluster. Short sequence motifs (cx2C motif) lie at residues 301–304 (CGSC) and 312–315 (CTGC). The tract at residues 301–315 (CGSCSLGDAFRCTGC) is fe-S binding site B.

This sequence belongs to the anamorsin family. As to quaternary structure, monomer. Interacts with TAH18. Interacts with MIA40. The cofactor is [2Fe-2S] cluster. [4Fe-4S] cluster is required as a cofactor.

The protein localises to the cytoplasm. Its subcellular location is the mitochondrion intermembrane space. In terms of biological role, component of the cytosolic iron-sulfur (Fe-S) protein assembly (CIA) machinery required for the maturation of extramitochondrial Fe-S proteins. Part of an electron transfer chain functioning in an early step of cytosolic Fe-S biogenesis, facilitating the de novo assembly of a [4Fe-4S] cluster on the scaffold complex CFD1-NBP35. Electrons are transferred to DRE2 from NADPH via the FAD- and FMN-containing protein TAH18. TAH18-DRE2 are also required for the assembly of the diferric tyrosyl radical cofactor of ribonucleotide reductase (RNR), probably by providing electrons for reduction during radical cofactor maturation in the catalytic small subunit RNR2. In Candida glabrata (strain ATCC 2001 / BCRC 20586 / JCM 3761 / NBRC 0622 / NRRL Y-65 / CBS 138) (Yeast), this protein is Fe-S cluster assembly protein DRE2.